The following is a 481-amino-acid chain: Glycogen synthase (481 aa).

Lysine 16 provides a ligand contact to ADP-alpha-D-glucose.

This sequence belongs to the glycosyltransferase 1 family. Bacterial/plant glycogen synthase subfamily.

The enzyme catalyses [(1-&gt;4)-alpha-D-glucosyl](n) + ADP-alpha-D-glucose = [(1-&gt;4)-alpha-D-glucosyl](n+1) + ADP + H(+). It functions in the pathway glycan biosynthesis; glycogen biosynthesis. In terms of biological role, synthesizes alpha-1,4-glucan chains using ADP-glucose. The protein is Glycogen synthase of Cellvibrio japonicus (strain Ueda107) (Pseudomonas fluorescens subsp. cellulosa).